Reading from the N-terminus, the 84-residue chain is Small ribosomal subunit protein uS17 (84 aa).

Belongs to the universal ribosomal protein uS17 family. Part of the 30S ribosomal subunit.

Its function is as follows. One of the primary rRNA binding proteins, it binds specifically to the 5'-end of 16S ribosomal RNA. This Borreliella burgdorferi (strain ATCC 35210 / DSM 4680 / CIP 102532 / B31) (Borrelia burgdorferi) protein is Small ribosomal subunit protein uS17.